Here is a 369-residue protein sequence, read N- to C-terminus: Aminomethyltransferase (369 aa).

It belongs to the GcvT family. In terms of assembly, the glycine cleavage system is composed of four proteins: P, T, L and H.

The enzyme catalyses N(6)-[(R)-S(8)-aminomethyldihydrolipoyl]-L-lysyl-[protein] + (6S)-5,6,7,8-tetrahydrofolate = N(6)-[(R)-dihydrolipoyl]-L-lysyl-[protein] + (6R)-5,10-methylene-5,6,7,8-tetrahydrofolate + NH4(+). Functionally, the glycine cleavage system catalyzes the degradation of glycine. The protein is Aminomethyltransferase of Xanthomonas axonopodis pv. citri (strain 306).